Here is a 297-residue protein sequence, read N- to C-terminus: Large ribosomal subunit protein uL18 (297 aa).

Lys164 participates in a covalent cross-link: Glycyl lysine isopeptide (Lys-Gly) (interchain with G-Cter in ubiquitin). A phosphoserine mark is found at Ser167, Ser176, and Ser235.

This sequence belongs to the universal ribosomal protein uL18 family. In terms of assembly, component of the large ribosomal subunit (LSU). Mature yeast ribosomes consist of a small (40S) and a large (60S) subunit. The 40S small subunit contains 1 molecule of ribosomal RNA (18S rRNA) and 33 different proteins (encoded by 57 genes). The large 60S subunit contains 3 rRNA molecules (25S, 5.8S and 5S rRNA) and 46 different proteins (encoded by 81 genes). Component of a hexameric 5S RNP precursor complex, composed of 5S RNA, RRS1, RPF2, RPL5, RPL11A/RPL11B and SYO1; this complex acts as a precursor for ribosome assembly. RPL5/uL18 forms a heterotrimeric complex with SYO1 and RPL11A/RPL11B/uL5. Interaction of this complex with KAP104 allows the nuclear import of the heterotrimer.

It localises to the cytoplasm. Its subcellular location is the nucleus. Functionally, component of the ribosome, a large ribonucleoprotein complex responsible for the synthesis of proteins in the cell. The small ribosomal subunit (SSU) binds messenger RNAs (mRNAs) and translates the encoded message by selecting cognate aminoacyl-transfer RNA (tRNA) molecules. The large subunit (LSU) contains the ribosomal catalytic site termed the peptidyl transferase center (PTC), which catalyzes the formation of peptide bonds, thereby polymerizing the amino acids delivered by tRNAs into a polypeptide chain. The nascent polypeptides leave the ribosome through a tunnel in the LSU and interact with protein factors that function in enzymatic processing, targeting, and the membrane insertion of nascent chains at the exit of the ribosomal tunnel. This chain is Large ribosomal subunit protein uL18, found in Saccharomyces cerevisiae (strain ATCC 204508 / S288c) (Baker's yeast).